The sequence spans 333 residues: Nuclear egress protein 1 (333 aa).

Residues 45–64 (SRRYKSVSRSGPSMRVRSRT) form a disordered region. Residues 128 to 251 (CLSLSGMGYH…YVIFPGKSVH (124 aa)) form a CCCH-type zinc finger.

Belongs to the herpesviridae NEC1 protein family. Forms a heterohexameric complex with NEC2. Interacts with capsid vertex specific component 2/CVC2; this interaction directs the capsid to the host inner nuclear membrane to initiate budding. Phosphorylated at serine residues in the N-terminus. This phosphorylation regulates the localization within the inner nuclear membrane.

It is found in the host nucleus inner membrane. Plays an essential role in virion nuclear egress, the first step of virion release from infected cell. Within the host nucleus, NEC1 interacts with the newly formed capsid through the vertexes and directs it to the inner nuclear membrane by associating with NEC2. Induces the budding of the capsid at the inner nuclear membrane as well as its envelopment into the perinuclear space. There, the NEC1/NEC2 complex promotes the fusion of the enveloped capsid with the outer nuclear membrane and the subsequent release of the viral capsid into the cytoplasm where it will reach the secondary budding sites in the host Golgi or trans-Golgi network. This chain is Nuclear egress protein 1, found in Varicella-zoster virus (strain Dumas) (HHV-3).